Reading from the N-terminus, the 172-residue chain is Nicotinamide-nucleotide adenylyltransferase (172 aa).

This sequence belongs to the archaeal NMN adenylyltransferase family.

It is found in the cytoplasm. The catalysed reaction is beta-nicotinamide D-ribonucleotide + ATP + H(+) = diphosphate + NAD(+). Its pathway is cofactor biosynthesis; NAD(+) biosynthesis; NAD(+) from nicotinamide D-ribonucleotide: step 1/1. In Sulfurisphaera tokodaii (strain DSM 16993 / JCM 10545 / NBRC 100140 / 7) (Sulfolobus tokodaii), this protein is Nicotinamide-nucleotide adenylyltransferase.